The sequence spans 704 residues: Elongation factor G (704 aa).

The 281-residue stretch at 10–290 folds into the tr-type G domain; the sequence is KKVRNIGIMA…AVVDYLPSPL (281 aa). Residues 19–26, 83–87, and 137–140 contribute to the GTP site; these read AHIDAGKT, DTPGH, and NKMD.

This sequence belongs to the TRAFAC class translation factor GTPase superfamily. Classic translation factor GTPase family. EF-G/EF-2 subfamily.

Its subcellular location is the cytoplasm. Catalyzes the GTP-dependent ribosomal translocation step during translation elongation. During this step, the ribosome changes from the pre-translocational (PRE) to the post-translocational (POST) state as the newly formed A-site-bound peptidyl-tRNA and P-site-bound deacylated tRNA move to the P and E sites, respectively. Catalyzes the coordinated movement of the two tRNA molecules, the mRNA and conformational changes in the ribosome. The polypeptide is Elongation factor G (Kocuria rhizophila (strain ATCC 9341 / DSM 348 / NBRC 103217 / DC2201)).